Consider the following 140-residue polypeptide: ATP synthase epsilon chain 1 (140 aa).

It belongs to the ATPase epsilon chain family. F-type ATPases have 2 components, CF(1) - the catalytic core - and CF(0) - the membrane proton channel. CF(1) has five subunits: alpha(3), beta(3), gamma(1), delta(1), epsilon(1). CF(0) has three main subunits: a, b and c.

It is found in the cell inner membrane. Functionally, produces ATP from ADP in the presence of a proton gradient across the membrane. In Methylococcus capsulatus (strain ATCC 33009 / NCIMB 11132 / Bath), this protein is ATP synthase epsilon chain 1.